Consider the following 360-residue polypeptide: Phospho-N-acetylmuramoyl-pentapeptide-transferase (360 aa).

10 helical membrane passes run 27-47 (ILSVLTALFIAFWVGPIMIRM), 73-93 (TMGGALILVAIVISTLLWGDL), 97-117 (FVWITLGVLFVFGAVGWVDDW), 132-152 (WKYLWLSVGALGAGCALFFTA), 164-184 (FFKSVAINMGWFYIVLTYFVI), 199-219 (GLAIMPTVLVGGALGIFAYAG), 236-256 (AGELVIISAALCGAGLGFLWF), 263-283 (VFMGDVGALSLGAVLGVMAVI), 288-308 (IVLFIMGGVFVMETVSVMLQV), and 337-357 (KIIVRFWIITVILVLVGLATL).

The protein belongs to the glycosyltransferase 4 family. MraY subfamily. It depends on Mg(2+) as a cofactor.

It is found in the cell inner membrane. It catalyses the reaction UDP-N-acetyl-alpha-D-muramoyl-L-alanyl-gamma-D-glutamyl-meso-2,6-diaminopimeloyl-D-alanyl-D-alanine + di-trans,octa-cis-undecaprenyl phosphate = di-trans,octa-cis-undecaprenyl diphospho-N-acetyl-alpha-D-muramoyl-L-alanyl-D-glutamyl-meso-2,6-diaminopimeloyl-D-alanyl-D-alanine + UMP. The protein operates within cell wall biogenesis; peptidoglycan biosynthesis. In terms of biological role, catalyzes the initial step of the lipid cycle reactions in the biosynthesis of the cell wall peptidoglycan: transfers peptidoglycan precursor phospho-MurNAc-pentapeptide from UDP-MurNAc-pentapeptide onto the lipid carrier undecaprenyl phosphate, yielding undecaprenyl-pyrophosphoryl-MurNAc-pentapeptide, known as lipid I. The polypeptide is Phospho-N-acetylmuramoyl-pentapeptide-transferase (Alcanivorax borkumensis (strain ATCC 700651 / DSM 11573 / NCIMB 13689 / SK2)).